A 485-amino-acid polypeptide reads, in one-letter code: ATP-dependent 6-phosphofructokinase 7 (485 aa).

Residues Gly101, 164–165 (RG), and 189–192 (GDGT) contribute to the ATP site. A Mg(2+)-binding site is contributed by Asp190. Substrate is bound by residues 218–220 (TID), 263–265 (MGR), Glu319, and 374–377 (YMIR). The active-site Proton acceptor is Asp220. Positions 449–485 (SFLGPKDTSEEKKELPETPLLDDGAVDIPPVTKEVTK) are disordered. Residues 455 to 464 (DTSEEKKELP) are compositionally biased toward basic and acidic residues.

It belongs to the phosphofructokinase type A (PFKA) family. PPi-dependent PFK group II subfamily. Atypical ATP-dependent clade 'X' sub-subfamily. As to quaternary structure, homotetramer. Mg(2+) is required as a cofactor. As to expression, expressed in roots, leaves, stems and flowers.

It is found in the cytoplasm. It catalyses the reaction beta-D-fructose 6-phosphate + ATP = beta-D-fructose 1,6-bisphosphate + ADP + H(+). It functions in the pathway carbohydrate degradation; glycolysis; D-glyceraldehyde 3-phosphate and glycerone phosphate from D-glucose: step 3/4. Allosterically activated by AMP. Its function is as follows. Catalyzes the phosphorylation of D-fructose 6-phosphate to fructose 1,6-bisphosphate by ATP, the first committing step of glycolysis. The polypeptide is ATP-dependent 6-phosphofructokinase 7 (Arabidopsis thaliana (Mouse-ear cress)).